We begin with the raw amino-acid sequence, 379 residues long: dTDP-3-amino-3,4,6-trideoxy-alpha-D-glucose transaminase (379 aa).

Residues glycine 67, glutamine 167, 188–193 (SFYPGK), tyrosine 221, tyrosine 227, 235–237 (NSR), and tyrosine 318 each bind pyridoxal 5'-phosphate. Residue lysine 193 is modified to N6-(pyridoxal phosphate)lysine.

Belongs to the degT/dnrJ/eryC1 family. As to quaternary structure, homodimer. The cofactor is pyridoxal 5'-phosphate.

The enzyme catalyses dTDP-3-amino-3,4,6-trideoxy-alpha-D-glucose + 2-oxoglutarate = dTDP-3-dehydro-4,6-dideoxy-alpha-D-glucose + L-glutamate. It functions in the pathway antibiotic biosynthesis. In terms of biological role, involved in the biosynthesis of dTDP-alpha-D-desosamine, a sugar found in several bacterial macrolide antibiotics. Catalyzes the reversible transfer of the amino group from L-glutamate to the C-3 position of dTDP-3-keto-4,6-deoxyglucose to yield dTDP-3-amino-3,4,6-trideoxyglucose. The protein is dTDP-3-amino-3,4,6-trideoxy-alpha-D-glucose transaminase of Streptomyces venezuelae.